The chain runs to 647 residues: Glutamyl-tRNA(Gln) amidotransferase subunit B, mitochondrial (647 aa).

A mitochondrion-targeting transit peptide spans 1–16 (MARNLCRNVQTTPRPL). The interval 39–77 (PRPRYFGSSTAKSAKKKSNNKAYSGSSMSAGDASAGPSR) is disordered. Residues 58 to 76 (NKAYSGSSMSAGDASAGPS) are compositionally biased toward low complexity.

This sequence belongs to the GatB/GatE family. GatB subfamily. As to quaternary structure, subunit of the heterotrimeric GatCAB amidotransferase (AdT) complex, composed of A, B and C subunits.

It localises to the mitochondrion. The catalysed reaction is L-glutamyl-tRNA(Gln) + L-glutamine + ATP + H2O = L-glutaminyl-tRNA(Gln) + L-glutamate + ADP + phosphate + H(+). Its function is as follows. Allows the formation of correctly charged Gln-tRNA(Gln) through the transamidation of misacylated Glu-tRNA(Gln) in the mitochondria. The reaction takes place in the presence of glutamine and ATP through an activated gamma-phospho-Glu-tRNA(Gln). This is Glutamyl-tRNA(Gln) amidotransferase subunit B, mitochondrial from Mycosarcoma maydis (Corn smut fungus).